Reading from the N-terminus, the 96-residue chain is Putative regulatory protein DET0036 (96 aa).

Belongs to the RemA family.

The sequence is that of Putative regulatory protein DET0036 from Dehalococcoides mccartyi (strain ATCC BAA-2266 / KCTC 15142 / 195) (Dehalococcoides ethenogenes (strain 195)).